The chain runs to 162 residues: Caveolin-2 (162 aa).

Residues 1–86 (MGLETEKADV…FEISKYIIYK (86 aa)) lie on the Cytoplasmic side of the membrane. A Phosphotyrosine; by SRC modification is found at tyrosine 19. A phosphoserine mark is found at serine 20 and serine 23. Phosphotyrosine; by SRC is present on tyrosine 27. Positions 87–107 (FLTVFLAIPLAFAAGILFATL) form an intramembrane region, helical. The Cytoplasmic segment spans residues 108–162 (SCLHIWITMPFVKTCLMVLPSVQTIWKSVTDVAIAPLCTSVGRSFSSVSLQLSHD).

Belongs to the caveolin family. Monomer or homodimer. Interacts with CAV1; the interaction forms a stable heterooligomeric complex that is required for targeting to lipid rafts and for caveolae formation. Tyrosine phosphorylated forms do not form heterooligomers with the Tyr-19-phosphorylated form existing as a monomer or dimer, and the Tyr-27-form as a monomer only. Interacts (tyrosine phosphorylated form) with the SH2 domain-containing proteins, RASA1, NCK1 and SRC. Interacts (tyrosine phosphorylated form) with INSR, the interaction (Tyr-27-phosphorylated form) is increased on insulin stimulation. Interacts (Tyr-19 phosphorylated form) with MAPK1 (phosphorylated form); the interaction, promoted by insulin, leads to nuclear location and MAPK1 activation. Interacts with STAT3; the interaction is increased on insulin-induced tyrosine phosphorylation leading to STAT activation. Phosphorylated on serine and tyrosine residues. CAV1 promotes phosphorylation on Ser-23 which then targets the complex to the plasma membrane, lipid rafts and caveolae. Phosphorylation on both Tyr-19 and Tyr-27 is required for insulin-induced 'Ser-727' phosphorylation of STAT3 and its activation. Phosphorylation on Tyr-19 is required for insulin-induced phosphorylation of MAPK1 and DNA binding of STAT3. Tyrosine phosphorylation is induced by both EGF and insulin.

Its subcellular location is the nucleus. It is found in the cytoplasm. The protein resides in the golgi apparatus membrane. The protein localises to the cell membrane. It localises to the membrane. Its subcellular location is the caveola. Functionally, may act as a scaffolding protein within caveolar membranes. Interacts directly with G-protein alpha subunits and can functionally regulate their activity. Acts as an accessory protein in conjunction with CAV1 in targeting to lipid rafts and driving caveolae formation. Positive regulator of cellular mitogenesis of the MAPK signaling pathway. Required for the insulin-stimulated nuclear translocation and activation of MAPK1 and STAT3, and the subsequent regulation of cell cycle progression. The protein is Caveolin-2 (CAV2) of Dasypus novemcinctus (Nine-banded armadillo).